We begin with the raw amino-acid sequence, 846 residues long: Translation initiation factor IF-2 (846 aa).

The disordered stretch occupies residues 94-263 (QRSPEEIQAE…HGFQNPTGPV (170 aa)). A compositionally biased stretch (basic and acidic residues) spans 96–135 (SPEEIQAEQKRELEERRAAENAARDKVEAEVRQRNEEQAR). Low complexity-rich tracts occupy residues 136 to 148 (RQAA…APAP) and 158 to 176 (AAPV…ASED). 2 stretches are compositionally biased toward basic and acidic residues: residues 177 to 206 (AAAR…RGEA) and 230 to 239 (TTDEESDGAR). Basic residues predominate over residues 240–253 (RGRGGKSKLKKRNQ). Residues 346–513 (SRAPVVTVMG…AVLLQAEILE (168 aa)) form the tr-type G domain. Residues 355–362 (GHVDHGKT) form a G1 region. 355–362 (GHVDHGKT) contributes to the GTP binding site. The interval 380-384 (GITQH) is G2. Positions 401-404 (DTPG) are G3. GTP is bound by residues 401–405 (DTPGH) and 455–458 (NKID). The interval 455 to 458 (NKID) is G4. Positions 491–493 (SAK) are G5.

It belongs to the TRAFAC class translation factor GTPase superfamily. Classic translation factor GTPase family. IF-2 subfamily.

Its subcellular location is the cytoplasm. Functionally, one of the essential components for the initiation of protein synthesis. Protects formylmethionyl-tRNA from spontaneous hydrolysis and promotes its binding to the 30S ribosomal subunits. Also involved in the hydrolysis of GTP during the formation of the 70S ribosomal complex. This Pseudomonas putida (strain ATCC 700007 / DSM 6899 / JCM 31910 / BCRC 17059 / LMG 24140 / F1) protein is Translation initiation factor IF-2.